The sequence spans 111 residues: MTLAAPIAVYVLAALAEIAGCFAFWAWLRLGKSPLWLVPGMVSLAVFAWLLTRVDADFAGRAYAAYGGIYVTASLGWLWLTEGQVPTRWDILGGGLCVLGAMVILAGPRAA.

The next 4 membrane-spanning stretches (helical) occupy residues 7 to 27 (IAVYVLAALAEIAGCFAFWAW), 30 to 50 (LGKSPLWLVPGMVSLAVFAWL), 62 to 82 (AYAAYGGIYVTASLGWLWLTE), and 91 to 111 (ILGGGLCVLGAMVILAGPRAA).

Belongs to the UPF0060 family.

It is found in the cell inner membrane. This is UPF0060 membrane protein Pden_1837 from Paracoccus denitrificans (strain Pd 1222).